The sequence spans 233 residues: DNA-directed RNA polymerase V subunit 5C (233 aa).

This sequence belongs to the archaeal Rpo5/eukaryotic RPB5 RNA polymerase subunit family. Component of the RNA polymerase V complex. As to expression, expressed in flower buds and siliques.

It is found in the nucleus. Functionally, DNA-dependent RNA polymerase catalyzes the transcription of DNA into RNA using the four ribonucleoside triphosphates as substrates. Component of RNA polymerase V involved in RNA-directed DNA methylation-dependent (RdDM) silencing of endogenous repeated sequences, including transposable elements. This chain is DNA-directed RNA polymerase V subunit 5C (NRPE5C), found in Arabidopsis thaliana (Mouse-ear cress).